The following is a 709-amino-acid chain: Phosphoribosylformylglycinamidine synthase subunit PurL (709 aa).

Histidine 36 is a catalytic residue. Tyrosine 39 and lysine 80 together coordinate ATP. Residue glutamate 82 coordinates Mg(2+). Residues 83–86 (SHNH) and arginine 105 each bind substrate. Catalysis depends on histidine 84, which acts as the Proton acceptor. Aspartate 106 serves as a coordination point for Mg(2+). Glutamine 226 provides a ligand contact to substrate. Aspartate 252 serves as a coordination point for Mg(2+). 294–296 (ETQ) serves as a coordination point for substrate. ATP contacts are provided by aspartate 470 and glycine 507. Residue serine 510 participates in substrate binding.

Belongs to the FGAMS family. As to quaternary structure, monomer. Part of the FGAM synthase complex composed of 1 PurL, 1 PurQ and 2 PurS subunits.

The protein localises to the cytoplasm. It catalyses the reaction N(2)-formyl-N(1)-(5-phospho-beta-D-ribosyl)glycinamide + L-glutamine + ATP + H2O = 2-formamido-N(1)-(5-O-phospho-beta-D-ribosyl)acetamidine + L-glutamate + ADP + phosphate + H(+). The protein operates within purine metabolism; IMP biosynthesis via de novo pathway; 5-amino-1-(5-phospho-D-ribosyl)imidazole from N(2)-formyl-N(1)-(5-phospho-D-ribosyl)glycinamide: step 1/2. Its function is as follows. Part of the phosphoribosylformylglycinamidine synthase complex involved in the purines biosynthetic pathway. Catalyzes the ATP-dependent conversion of formylglycinamide ribonucleotide (FGAR) and glutamine to yield formylglycinamidine ribonucleotide (FGAM) and glutamate. The FGAM synthase complex is composed of three subunits. PurQ produces an ammonia molecule by converting glutamine to glutamate. PurL transfers the ammonia molecule to FGAR to form FGAM in an ATP-dependent manner. PurS interacts with PurQ and PurL and is thought to assist in the transfer of the ammonia molecule from PurQ to PurL. The protein is Phosphoribosylformylglycinamidine synthase subunit PurL of Saccharolobus islandicus (strain M.14.25 / Kamchatka #1) (Sulfolobus islandicus).